The sequence spans 376 residues: Queuine tRNA-ribosyltransferase (376 aa).

The active-site Proton acceptor is the Asp89. Residues Asp89–Phe93, Asp143, Gln194, and Gly221 each bind substrate. Positions Gly252–Asn258 are RNA binding. Asp271 acts as the Nucleophile in catalysis. 4 residues coordinate Zn(2+): Cys309, Cys311, Cys314, and His340.

It belongs to the queuine tRNA-ribosyltransferase family. In terms of assembly, homodimer. Within each dimer, one monomer is responsible for RNA recognition and catalysis, while the other monomer binds to the replacement base PreQ1. Zn(2+) serves as cofactor.

It catalyses the reaction 7-aminomethyl-7-carbaguanine + guanosine(34) in tRNA = 7-aminomethyl-7-carbaguanosine(34) in tRNA + guanine. It functions in the pathway tRNA modification; tRNA-queuosine biosynthesis. Catalyzes the base-exchange of a guanine (G) residue with the queuine precursor 7-aminomethyl-7-deazaguanine (PreQ1) at position 34 (anticodon wobble position) in tRNAs with GU(N) anticodons (tRNA-Asp, -Asn, -His and -Tyr). Catalysis occurs through a double-displacement mechanism. The nucleophile active site attacks the C1' of nucleotide 34 to detach the guanine base from the RNA, forming a covalent enzyme-RNA intermediate. The proton acceptor active site deprotonates the incoming PreQ1, allowing a nucleophilic attack on the C1' of the ribose to form the product. After dissociation, two additional enzymatic reactions on the tRNA convert PreQ1 to queuine (Q), resulting in the hypermodified nucleoside queuosine (7-(((4,5-cis-dihydroxy-2-cyclopenten-1-yl)amino)methyl)-7-deazaguanosine). The chain is Queuine tRNA-ribosyltransferase from Clostridium kluyveri (strain NBRC 12016).